The sequence spans 338 residues: UPF0324 membrane protein HI_1643 (338 aa).

10 consecutive transmembrane segments (helical) span residues 5–23 (PFYF…ANYL), 33–55 (HISA…YPQF), 62–84 (GVLF…RLTF), 94–116 (AVVT…GIRY), 123–145 (LVYL…AEPV), 155–177 (VAIA…FYTW), 222–239 (LRVM…WLLT), 254–273 (IPWF…FDLL), 280–302 (LFVE…TTQA), and 312–334 (PLVL…NYGI).

Belongs to the UPF0324 family.

Its subcellular location is the cell membrane. The chain is UPF0324 membrane protein HI_1643 from Haemophilus influenzae (strain ATCC 51907 / DSM 11121 / KW20 / Rd).